We begin with the raw amino-acid sequence, 580 residues long: Probable glucomannan 4-beta-mannosyltransferase 2 (580 aa).

Positions 1-12 are enriched in polar residues; it reads MSTNGGAPSQKR. Residues 1-33 are disordered; the sequence is MSTNGGAPSQKRSWLPSRPLLTTTTQTYPPPLL. Over residues 15-27 the composition is skewed to low complexity; the sequence is LPSRPLLTTTTQT. The chain crosses the membrane as a helical span at residues 85–105; the sequence is AVWACLAMSAMLVAEAAWMGL. Asp182 is a catalytic residue. Residues Asp241 and Asp243 each contribute to the substrate site. The active site involves Asp335. The next 4 membrane-spanning stretches (helical) occupy residues 414–434, 437–457, 528–548, and 554–574; these read AIAP…SAMV, VTIP…MNAI, IYIP…YDFV, and YYIY…GFVG.

This sequence belongs to the glycosyltransferase 2 family. Plant cellulose synthase-like A subfamily.

Its subcellular location is the golgi apparatus membrane. It carries out the reaction GDP-mannose + (glucomannan)n = GDP + (glucomannan)n+1.. Its function is as follows. Probable mannan synthase which consists of a 4-beta-mannosyltransferase activity on mannan using GDP-mannose. The beta-1,4-mannan product is the backbone for galactomannan synthesis by galactomannan galactosyltransferase. Galactomannan is a noncellulosic polysaccharides of plant cell wall. The protein is Probable glucomannan 4-beta-mannosyltransferase 2 of Oryza sativa subsp. japonica (Rice).